A 670-amino-acid chain; its full sequence is Receptor for retinol uptake STRA6 (670 aa).

The Extracellular portion of the chain corresponds to 1–50 (MESQASENGSQTSSGVTDDYSSWYIEEPLGAEEVQPEGVIPLCQLTAPPA). A glycan (N-linked (GlcNAc...) asparagine) is linked at asparagine 8. A helical transmembrane segment spans residues 51 to 71 (LLHACLASLSFLVLLLLALLV). Residues 72-97 (RRRRLWPRCGHRGLGLPSPVDFLAGD) lie on the Cytoplasmic side of the membrane. Residues 98–118 (LSWTVPAAVFVVLFSNLCLLL) traverse the membrane as a helical segment. Residues 119–144 (PDENPLPFLNLTAASSPDGEMETSRG) are Extracellular-facing. An N-linked (GlcNAc...) asparagine glycan is attached at asparagine 128. The helical transmembrane segment at 145–165 (PWKLLALLYYPALYYPLAACA) threads the bilayer. Over 166-168 (SAG) the chain is Cytoplasmic. The helical transmembrane segment at 169-189 (HQAAFLLGTVLSWAHFGVQVW) threads the bilayer. Over 190–205 (QKAECPQDPKIYKHYS) the chain is Extracellular. The chain crosses the membrane as a helical span at residues 206–226 (LLASLPLLLGLGFLSLWYPVQ). Residues 227 to 296 (LVQSLRHRTG…PQPGFRLPLK (70 aa)) lie on the Cytoplasmic side of the membrane. Residues 235–294 (TGAGSQGLQTSYSEKYLRTLLCPKKLDSCSHPASKRSLLSRAWAFSHHSIYTPQPGFRLP) form an interaction with RBP1 region. The helical transmembrane segment at 297–317 (LVISATLTGTATYQVALLLLV) threads the bilayer. The Extracellular portion of the chain corresponds to 318–368 (SVVPTVQKVRAGINTDVSYLLAGFGIVLSEDRQEVVELVKHHLWTVEACYI). Residues 369 to 389 (SALVLSCASTFLLLIRSLRTH) form a helical membrane-spanning segment. Residues 390–423 (RANLQALHRGAALDLDPPLQSIHPSRQAIVSWMS) lie on the Cytoplasmic side of the membrane. A helical transmembrane segment spans residues 424 to 444 (FCAYQTAFSCLGLLVQQVIFF). The Extracellular segment spans residues 445 to 474 (LGTTSLAFLVFVPLLHGRNLLLLRSLESTW). A helical transmembrane segment spans residues 475 to 495 (PFWLTVALAVILQNIAANWIF). Topologically, residues 496–510 (LRTHHGYPELTNRRM) are cytoplasmic. The segment at residues 511-548 (LCVATFLLFPINMLVGAIMAVWRVLISSLYNTVHLGQM) is an intramembrane region (helical). The Cytoplasmic portion of the chain corresponds to 549–670 (DLSLLPQRAA…TSAKANGTQP (122 aa)). Tyrosine 644 is modified (phosphotyrosine).

As to quaternary structure, homodimer. Interacts with JAK2 and STAT5. Interacts (via extracellular domains) with RBP4. Interacts (via cytoplasmic domains) with RBP1. In terms of processing, phosphorylated on tyrosine residues in response to RBP4 binding. Phosphorylation requires the presence of LRAT, suggesting it may be triggered by the uptake of retinol that is then metabolized within the cell to retinoids that function as signaling molecules. Widely expressed in the embryo. Detected in adult in the retinal pigment epithelium in the eye. In the adult, is highly expressed in cells that compose blood-organ barriers in the brain (choroid plexus and the brain microvascular), in testis (the basal layer of the seminiferous epithelium), in the yolk sac, and in the chorioallantoic placenta. Detected in white adipose tissue and skeletal muscle, but not in liver (at protein level). Widely expressed in adult, with high expression levels in the eye. Detected in brain, cerebellum, testis, pituitary, pancreas, kidney, spleen, and female genital tract; and at very low levels in heart and lung. Not detected in liver.

Its subcellular location is the cell membrane. Functions as a retinol transporter. Accepts all-trans retinol from the extracellular retinol-binding protein RBP4, facilitates retinol transport across the cell membrane, and then transfers retinol to the cytoplasmic retinol-binding protein RBP1. Retinol uptake is enhanced by LRAT, an enzyme that converts retinol to all-trans retinyl esters, the storage forms of vitamin A. Contributes to the activation of a signaling cascade that depends on retinol transport and LRAT-dependent generation of retinol metabolites that then trigger activation of JAK2 and its target STAT5, and ultimately increase the expression of SOCS3 and inhibit cellular responses to insulin. Important for the homeostasis of vitamin A and its derivatives, such as retinoic acid and 11-cis-retinal. STRA6-mediated transport is particularly important in the eye, and under conditions of dietary vitamin A deficiency. Does not transport retinoic acid. This Mus musculus (Mouse) protein is Receptor for retinol uptake STRA6 (Stra6).